A 347-amino-acid chain; its full sequence is Phosphate acyltransferase (347 aa).

The protein belongs to the PlsX family. As to quaternary structure, homodimer. Probably interacts with PlsY.

The protein resides in the cytoplasm. The enzyme catalyses a fatty acyl-[ACP] + phosphate = an acyl phosphate + holo-[ACP]. It participates in lipid metabolism; phospholipid metabolism. Catalyzes the reversible formation of acyl-phosphate (acyl-PO(4)) from acyl-[acyl-carrier-protein] (acyl-ACP). This enzyme utilizes acyl-ACP as fatty acyl donor, but not acyl-CoA. The chain is Phosphate acyltransferase from Oleidesulfovibrio alaskensis (strain ATCC BAA-1058 / DSM 17464 / G20) (Desulfovibrio alaskensis).